Here is a 296-residue protein sequence, read N- to C-terminus: L-isoleucine 3(1)-dioxygenase (296 aa).

Residues histidine 176, aspartate 178, and histidine 267 each coordinate Fe cation.

It belongs to the iron/ascorbate-dependent oxidoreductase family. L-ascorbate serves as cofactor. Fe(2+) is required as a cofactor.

The catalysed reaction is L-isoleucine + 2-oxoglutarate + O2 = 3(1)-hydroxy-L-isoleucine + succinate + CO2. In terms of biological role, catalyzes the hydroxylation of L-isoleucine at the C-4' position to form L-4'-hydroxyisoleucine (4'-HIL). Exhibits low activity with L-valine and L-methionine. The chain is L-isoleucine 3(1)-dioxygenase from Pantoea ananatis (strain AJ13355).